The primary structure comprises 61 residues: Large ribosomal subunit protein uL30 (61 aa).

This sequence belongs to the universal ribosomal protein uL30 family. Part of the 50S ribosomal subunit.

This is Large ribosomal subunit protein uL30 from Oenococcus oeni (strain ATCC BAA-331 / PSU-1).